The sequence spans 257 residues: ABC transporter ATP-binding protein YxdL (257 aa).

The ABC transporter domain occupies 5–243 (LEVKHINKTY…FYEQILDVLS (239 aa)). 40–47 (GPSGSGKT) provides a ligand contact to ATP.

The protein belongs to the ABC transporter superfamily. As to quaternary structure, the complex is composed of two ATP-binding proteins (YxdL) and two transmembrane proteins (YxdM).

Its function is as follows. Part of the ABC transporter complex YxdLM which could be involved in peptide resistance. Responsible for energy coupling to the transport system. This chain is ABC transporter ATP-binding protein YxdL (yxdL), found in Bacillus subtilis (strain 168).